The primary structure comprises 312 residues: tRNA-cytidine(32) 2-sulfurtransferase (312 aa).

The PP-loop motif signature appears at 39–44 (SGGKDS). The [4Fe-4S] cluster site is built by cysteine 114, cysteine 117, and cysteine 205.

Belongs to the TtcA family. Homodimer. Mg(2+) serves as cofactor. The cofactor is [4Fe-4S] cluster.

It localises to the cytoplasm. It carries out the reaction cytidine(32) in tRNA + S-sulfanyl-L-cysteinyl-[cysteine desulfurase] + AH2 + ATP = 2-thiocytidine(32) in tRNA + L-cysteinyl-[cysteine desulfurase] + A + AMP + diphosphate + H(+). It functions in the pathway tRNA modification. Its function is as follows. Catalyzes the ATP-dependent 2-thiolation of cytidine in position 32 of tRNA, to form 2-thiocytidine (s(2)C32). The sulfur atoms are provided by the cysteine/cysteine desulfurase (IscS) system. This Ralstonia nicotianae (strain ATCC BAA-1114 / GMI1000) (Ralstonia solanacearum) protein is tRNA-cytidine(32) 2-sulfurtransferase.